We begin with the raw amino-acid sequence, 207 residues long: Hydrogenase expression/formation protein HoxM (207 aa).

Positions 19, 65, and 96 each coordinate Ni(2+).

The protein belongs to the peptidase A31 family.

In terms of biological role, not known. Could be involved in the processing of hydrogenase. This chain is Hydrogenase expression/formation protein HoxM (hoxM), found in Azotobacter vinelandii.